The sequence spans 292 residues: Shikimate dehydrogenase (NADP(+)) (292 aa).

Residues 22–24 and serine 69 each bind shikimate; that span reads SLS. Lysine 73 (proton acceptor) is an active-site residue. Residues asparagine 94 and aspartate 111 each contribute to the shikimate site. NADP(+) contacts are provided by residues 135 to 139 and isoleucine 236; that span reads GVGGA. Residue tyrosine 238 participates in shikimate binding. Residue glycine 260 coordinates NADP(+).

The protein belongs to the shikimate dehydrogenase family. As to quaternary structure, homodimer.

The catalysed reaction is shikimate + NADP(+) = 3-dehydroshikimate + NADPH + H(+). The protein operates within metabolic intermediate biosynthesis; chorismate biosynthesis; chorismate from D-erythrose 4-phosphate and phosphoenolpyruvate: step 4/7. In terms of biological role, involved in the biosynthesis of the chorismate, which leads to the biosynthesis of aromatic amino acids. Catalyzes the reversible NADPH linked reduction of 3-dehydroshikimate (DHSA) to yield shikimate (SA). The protein is Shikimate dehydrogenase (NADP(+)) of Streptococcus pyogenes serotype M3 (strain ATCC BAA-595 / MGAS315).